The chain runs to 330 residues: Membrane progestin receptor gamma (330 aa).

The Cytoplasmic portion of the chain corresponds to 1–51 (MLSLKLPRLFSIDQIPQVFHEQGILFGYRHPQSSATACILSLFQMTNETLN). A helical transmembrane segment spans residues 52-72 (IWTHLLPFWFFAWRFVTALYM). The Extracellular segment spans residues 73–80 (TDIKNDSY). The chain crosses the membrane as a helical span at residues 81–101 (SWPMLVYMCTSCVYPLVSSCA). The Cytoplasmic portion of the chain corresponds to 102 to 113 (HTFSSMSKNARH). Residues 114 to 134 (ICYFLDYGAVNLFSLGSAIAY) traverse the membrane as a helical segment. The Extracellular portion of the chain corresponds to 135 to 141 (SAYTFPD). A helical membrane pass occupies residues 142-162 (ALMCTTFHDYYVALAVLNTIL). Residues 163–186 (STGLSCYSRFLEIQKPRLCKVIRV) lie on the Cytoplasmic side of the membrane. Residues 187 to 207 (LAFAYPYTWDSLPIFYRLFLF) form a helical membrane-spanning segment. At 208–253 (PGESAQNEATSYHQKHMIMTLLASFLYSAHLPERLAPGRFDYIGHS) the chain is on the extracellular side. Residues 254–274 (HQLFHVCVILATHMQMEAILL) form a helical membrane-spanning segment. Residues 275–294 (DKTLRKEWLLATSKPFSFSQ) lie on the Cytoplasmic side of the membrane. Residues 295 to 315 (IAGAILLCIIFSLSNIIYFSA) form a helical membrane-spanning segment. At 316–330 (ALYRIPKPELHKKET) the chain is on the extracellular side.

The protein belongs to the ADIPOR family. In terms of tissue distribution, expressed in the brain, lung, kidney, colon, adrenal and lung.

Its subcellular location is the cell membrane. Its function is as follows. Plasma membrane progesterone (P4) receptor coupled to G proteins. Seems to act through a G(i) mediated pathway. May be involved in oocyte maturation. The polypeptide is Membrane progestin receptor gamma (Homo sapiens (Human)).